Here is a 283-residue protein sequence, read N- to C-terminus: Non-selective voltage-gated ion channel VDAC3 (283 aa).

At cysteine 2 the chain carries N-acetylcysteine. Residue threonine 4 is modified to Phosphothreonine. Residues lysine 12, lysine 15, and lysine 20 each carry the N6-acetyllysine modification. Transmembrane regions (beta stranded) follow at residues 26 to 35 (MVKIDLKTKS) and 39 to 47 (VEFSTSGHA). Threonine 33 is modified (phosphothreonine). Lysine 53 is covalently cross-linked (Glycyl lysine isopeptide (Lys-Gly) (interchain with G-Cter in ubiquitin)). The next 3 membrane-spanning stretches (beta stranded) occupy residues 54 to 64 (ASGNLETKYKV), 69 to 76 (LIFTQKWN), and 80 to 89 (TLGTEISWEN). Lysine 90 bears the N6-acetyllysine mark. The chain crosses the membrane as a beta stranded span at residues 95–104 (LKLTVDTIFV). Residues lysine 109 and lysine 110 each participate in a glycyl lysine isopeptide (Lys-Gly) (interchain with G-Cter in ubiquitin) cross-link. Beta stranded transmembrane passes span 111 to 120 (SGKLKASYRR), 123 to 130 (FSVGSKVD), 137 to 145 (TIYGWAVLA), 150 to 158 (LAGYQMSFD), 163 to 175 (KLCQ…GYKA), 178 to 185 (FQLHTHVN), 189 to 198 (EFGGSIYQRV), 202 to 211 (IETSINLAWT), 218 to 227 (RFGIAAKYRL), and 231 to 238 (TSLSAKVN). Position 241 is a phosphoserine (serine 241). NAD(+)-binding positions include 242–244 (LIG) and 260–264 (SALVD). The next 2 beta stranded transmembrane spans lie at 242–251 (LIGLGYTQSL) and 254–263 (GVKLTLSALV). Position 266 is an N6-acetyllysine; alternate (lysine 266). Lysine 266 is covalently cross-linked (Glycyl lysine isopeptide (Lys-Gly) (interchain with G-Cter in ubiquitin); alternate). Residues 273–282 (HKVGLGFELE) traverse the membrane as a beta stranded segment.

Belongs to the eukaryotic mitochondrial porin family. Interacts with ARMC12 in a TBC1D21-dependent manner. Interacts with MISFA. Post-translationally, ubiquitinated by PRKN during mitophagy, leading to its degradation and enhancement of mitophagy. Deubiquitinated by USP30. In terms of tissue distribution, isoform 1 is widely expressed with strong expression in atrium and ascitic tumor, lower levels in brain and very low levels in liver and kidney. Isoform 2 is also widely expressed with highest levels in brain but no expression in kidney. Also expressed in flagella of epididymal sperm.

Its subcellular location is the mitochondrion outer membrane. The protein localises to the membrane. It carries out the reaction chloride(in) = chloride(out). The enzyme catalyses K(+)(in) = K(+)(out). In terms of biological role, non-selective voltage-gated ion channel that mediates the transport of anions and cations through the mitochondrion outer membrane and plasma membrane. Forms a high-conducting channel with a stable open state and a voltage-induced closure with a mild preference for anions over cations. Involved in male fertility and sperm mitochondrial sheath formation. The sequence is that of Non-selective voltage-gated ion channel VDAC3 from Rattus norvegicus (Rat).